An 83-amino-acid polypeptide reads, in one-letter code: MAGKGVGTPLSALFLLVLLVVTIGMMEVQVAEGRMCKTPSAKFKGYCVSSTNCKNVCRTEGFPTGSCDFHITSRKCYCYKPCP.

The signal sequence occupies residues 1–33 (MAGKGVGTPLSALFLLVLLVVTIGMMEVQVAEG). 4 disulfide bridges follow: cysteine 36-cysteine 82, cysteine 47-cysteine 67, cysteine 53-cysteine 76, and cysteine 57-cysteine 78.

It belongs to the DEFL family.

It is found in the secreted. In terms of biological role, plant defense peptide. Has antifungal activity. This chain is Defensin-2, found in Pinus sylvestris (Scotch pine).